A 497-amino-acid chain; its full sequence is Meiosis-specific serine/threonine-protein kinase MEK1 (497 aa).

Residues valine 47–leucine 102 form the FHA domain. The region spanning glutamate 162 to isoleucine 444 is the Protein kinase domain. ATP-binding positions include valine 168–valine 176 and lysine 199. Residue aspartate 290 is the Proton acceptor of the active site.

This sequence belongs to the protein kinase superfamily. CAMK Ser/Thr protein kinase family. CHEK2 subfamily.

The enzyme catalyses L-seryl-[protein] + ATP = O-phospho-L-seryl-[protein] + ADP + H(+). The catalysed reaction is L-threonyl-[protein] + ATP = O-phospho-L-threonyl-[protein] + ADP + H(+). In terms of biological role, probable protein kinase required for meiotic recombination. In Saccharomyces cerevisiae (strain ATCC 204508 / S288c) (Baker's yeast), this protein is Meiosis-specific serine/threonine-protein kinase MEK1 (MEK1).